Here is an 80-residue protein sequence, read N- to C-terminus: Cell division activator CedA (80 aa).

Belongs to the CedA family.

Its function is as follows. Activates the cell division inhibited by chromosomal DNA over-replication. The polypeptide is Cell division activator CedA (Salmonella typhimurium (strain LT2 / SGSC1412 / ATCC 700720)).